We begin with the raw amino-acid sequence, 330 residues long: Putative UV-damage endonuclease (330 aa).

The protein belongs to the uve1/UvsE family.

It localises to the virion. Functionally, endonuclease for the repair of UV-irradiated DNA. The sequence is that of Putative UV-damage endonuclease from Acanthamoeba polyphaga mimivirus (APMV).